A 108-amino-acid polypeptide reads, in one-letter code: Holo-[acyl-carrier-protein] synthase (108 aa).

Mg(2+) is bound by residues aspartate 9 and glutamate 52.

This sequence belongs to the P-Pant transferase superfamily. AcpS family. Mg(2+) serves as cofactor.

It localises to the cytoplasm. It carries out the reaction apo-[ACP] + CoA = holo-[ACP] + adenosine 3',5'-bisphosphate + H(+). Its function is as follows. Transfers the 4'-phosphopantetheine moiety from coenzyme A to a Ser of acyl-carrier-protein. In Coprothermobacter proteolyticus (strain ATCC 35245 / DSM 5265 / OCM 4 / BT), this protein is Holo-[acyl-carrier-protein] synthase.